The sequence spans 607 residues: ENTH domain-containing protein 1 (607 aa).

The region spanning 9 to 141 (NFVKNYSDAE…MDEPLLCKER (133 aa)) is the ENTH domain. Positions 543-574 (EAKNSISVLLREVKRAIARLHEDLSTVIQELN) form a coiled coil.

This chain is ENTH domain-containing protein 1 (ENTHD1), found in Homo sapiens (Human).